The sequence spans 608 residues: uncharacterized protein (608 aa).

The disordered stretch occupies residues 1 to 21 (MHTNSPLRADNQDLETQPLLR). The residue at position 24 (threonine 24) is a Phosphothreonine. Position 27 is a phosphoserine (serine 27). A helical membrane pass occupies residues 55 to 75 (IIYLLGIVLLSFFGVSIVQYI). N-linked (GlcNAc...) asparagine glycosylation is found at asparagine 115, asparagine 141, asparagine 169, asparagine 407, asparagine 425, asparagine 449, asparagine 453, asparagine 527, and asparagine 580.

The protein resides in the membrane. This is an uncharacterized protein from Saccharomyces cerevisiae (strain ATCC 204508 / S288c) (Baker's yeast).